The primary structure comprises 461 residues: Photosystem II CP43 reaction center protein (461 aa).

Residues 1–2 (ME) constitute a propeptide that is removed on maturation. Threonine 3 carries the N-acetylthreonine modification. At threonine 3 the chain carries Phosphothreonine. 5 helical membrane passes run 57–81 (LFEV…PHIA), 122–143 (LIGP…KDKN), 166–188 (KAMY…RVIT), 243–263 (TPWP…LSYS), and 279–300 (WFNN…ASQS). Residue glutamate 355 coordinates [CaMn4O5] cluster. A helical membrane pass occupies residues 435 to 459 (RARAAAAGFEKGIDRFDEPVLSMRP).

The protein belongs to the PsbB/PsbC family. PsbC subfamily. PSII is composed of 1 copy each of membrane proteins PsbA, PsbB, PsbC, PsbD, PsbE, PsbF, PsbH, PsbI, PsbJ, PsbK, PsbL, PsbM, PsbT, PsbX, PsbY, PsbZ, Psb30/Ycf12, at least 3 peripheral proteins of the oxygen-evolving complex and a large number of cofactors. It forms dimeric complexes. Binds multiple chlorophylls and provides some of the ligands for the Ca-4Mn-5O cluster of the oxygen-evolving complex. It may also provide a ligand for a Cl- that is required for oxygen evolution. PSII binds additional chlorophylls, carotenoids and specific lipids. serves as cofactor. Post-translationally, phosphorylated in vitro.

The protein resides in the plastid. It localises to the chloroplast thylakoid membrane. One of the components of the core complex of photosystem II (PSII). It binds chlorophyll and helps catalyze the primary light-induced photochemical processes of PSII. PSII is a light-driven water:plastoquinone oxidoreductase, using light energy to abstract electrons from H(2)O, generating O(2) and a proton gradient subsequently used for ATP formation. This chain is Photosystem II CP43 reaction center protein, found in Chlamydomonas reinhardtii (Chlamydomonas smithii).